We begin with the raw amino-acid sequence, 352 residues long: Peptide chain release factor 1 (352 aa).

Residue Gln-233 is modified to N5-methylglutamine. Residues 288 to 309 are disordered; that stretch reads NAKDRKEQVGSGDRSERIRTYN. Over residues 289–306 the composition is skewed to basic and acidic residues; sequence AKDRKEQVGSGDRSERIR.

Belongs to the prokaryotic/mitochondrial release factor family. Methylated by PrmC. Methylation increases the termination efficiency of RF1.

It is found in the cytoplasm. Its function is as follows. Peptide chain release factor 1 directs the termination of translation in response to the peptide chain termination codons UAG and UAA. The sequence is that of Peptide chain release factor 1 from Helicobacter pylori (strain G27).